Consider the following 499-residue polypeptide: MIKRALISVFDKTGILDLAKFLESRDVEIISTGGTYKHLKENGVKVIDIEEVTGFPEMLDGRVKTLNPLIHGGILAIRDNEEHMKVIEEKGINPIDMVVVNLYPFFNKVEENLSFDEKVEFIDIGGPTMIRAAAKNFKDVVVLTDTKDYENVINEIKENNQVNIQTRKKLAGKVFNLMSAYDAAISNFLLEEEYPEYLTLSYKKNMDLRYGENPHQTAAYYTSTVGKYPMKNFEKLNGKELSYNNIKDMDIAWKTVCEFEEVACCALKHNTPCGVAIGDTVQEAYTKAYECDPISIFGGIVAFNRKVDKETAENLAKIFLEIVVAPDFDEDALEVLKNKKNLRVIKCEEKSTEGKDMAKVDGGILVQKSDNKLLEDTKVVTEKSPTEQEMKDLIFGMKVVKYVKSNAIVVVKDGMAKGIGGGQVNRIWAAKEALDRAGDGVVLASDAFFPFGDVAEEAAKWGIKAIIQPGGSIRDEESIKVCNEKGISMVFTGIRHFKH.

The region spanning 1 to 144 (MIKRALISVF…KNFKDVVVLT (144 aa)) is the MGS-like domain.

Belongs to the PurH family.

The catalysed reaction is (6R)-10-formyltetrahydrofolate + 5-amino-1-(5-phospho-beta-D-ribosyl)imidazole-4-carboxamide = 5-formamido-1-(5-phospho-D-ribosyl)imidazole-4-carboxamide + (6S)-5,6,7,8-tetrahydrofolate. It carries out the reaction IMP + H2O = 5-formamido-1-(5-phospho-D-ribosyl)imidazole-4-carboxamide. It functions in the pathway purine metabolism; IMP biosynthesis via de novo pathway; 5-formamido-1-(5-phospho-D-ribosyl)imidazole-4-carboxamide from 5-amino-1-(5-phospho-D-ribosyl)imidazole-4-carboxamide (10-formyl THF route): step 1/1. It participates in purine metabolism; IMP biosynthesis via de novo pathway; IMP from 5-formamido-1-(5-phospho-D-ribosyl)imidazole-4-carboxamide: step 1/1. The polypeptide is Bifunctional purine biosynthesis protein PurH (Clostridium botulinum (strain Hall / ATCC 3502 / NCTC 13319 / Type A)).